A 1263-amino-acid polypeptide reads, in one-letter code: Multidrug resistance protein sirA (1263 aa).

The segment at 1–21 (MAEPESEKPSSAQGGGLPSSD) is disordered. A run of 4 helical transmembrane segments spans residues 57–77 (LISA…ILFI), 104–124 (IALY…IFTN), 179–199 (KIGL…IGFV), and 206–226 (FILT…SGFM). The 291-residue stretch at 57-347 (LISAFFAAVS…VGPHLQAMSL (291 aa)) folds into the ABC transmembrane type-1 1 domain. N232 is a glycosylation site (N-linked (GlcNAc...) asparagine). Helical transmembrane passes span 284-304 (VMGW…GLAI) and 318-338 (VGAI…FGNV). The ABC transporter 1 domain occupies 380–625 (IEFRNVSHVY…EGLYQTFVRR (246 aa)). N-linked (GlcNAc...) asparagine glycosylation occurs at N384. Residue 415 to 422 (GASGSGKS) participates in ATP binding. The N-linked (GlcNAc...) asparagine glycan is linked to N469. Residues 635–672 (PPHARITPAVDTPASPQHRLSEKTGSIYGQGESEAADK) are disordered. 6 consecutive transmembrane segments (helical) span residues 699–719 (VTGI…SVFF), 740–760 (FWAA…GVQG), 817–839 (VFLG…SLAV), 843–865 (LTLV…LKLV), 930–950 (LSEA…ATLV), and 960–980 (FFIV…VFAF). In terms of domain architecture, ABC transmembrane type-1 2 spans 699–986 (VTGIASAVIS…VFAFAPDFGK (288 aa)). Residues 1021 to 1259 (VDVSNVVFYY…RGSYYDSVNL (239 aa)) form the ABC transporter 2 domain. 1056–1063 (GGSGSGKS) is a binding site for ATP.

Belongs to the ABC transporter superfamily. ABCB family. Multidrug resistance exporter (TC 3.A.1.201) subfamily.

Its subcellular location is the cell membrane. It catalyses the reaction ATP + H2O + xenobioticSide 1 = ADP + phosphate + xenobioticSide 2.. Functionally, sirodesmin transporter that provides the dual role of sirodesmin export and self-protection. Also provides tolerance to gliotoxin. The protein is Multidrug resistance protein sirA of Leptosphaeria maculans (Blackleg fungus).